The sequence spans 81 residues: Large ribosomal subunit protein bL27m (81 aa).

The span at 1–11 (MATKKSGGSSR) shows a compositional bias: polar residues. Residues 1–20 (MATKKSGGSSRNGRDSKGRR) are disordered.

Belongs to the bacterial ribosomal protein bL27 family.

The protein localises to the mitochondrion. This Reclinomonas americana protein is Large ribosomal subunit protein bL27m (RPL27).